The primary structure comprises 118 residues: V-type proton ATPase subunit G 3 (118 aa).

Over residues 1–12 (MTSQSQGIQQLL) the composition is skewed to polar residues. A disordered region spans residues 1 to 44 (MTSQSQGIQQLLQAEKRAKDKLDEAKKRKGKRLRQAKEEAVAET). Residues 5 to 53 (SQGIQQLLQAEKRAKDKLDEAKKRKGKRLRQAKEEAVAETDQYRMQMEK) adopt a coiled-coil conformation. Positions 14–26 (AEKRAKDKLDEAK) are enriched in basic and acidic residues.

Belongs to the V-ATPase G subunit family. V-ATPase is a heteromultimeric enzyme made up of two complexes: the ATP-hydrolytic V1 complex and the proton translocation V0 complex. The V1 complex consists of three catalytic AB heterodimers that form a heterohexamer, three peripheral stalks each consisting of EG heterodimers, one central rotor including subunits D and F, and the regulatory subunits C and H. The proton translocation complex V0 consists of the proton transport subunit a, a ring of proteolipid subunits c9c'', rotary subunit d, subunits e and f, and the accessory subunits ATP6AP1/Ac45 and ATP6AP2/PRR. In terms of tissue distribution, kidney.

In terms of biological role, subunit of the V1 complex of vacuolar(H+)-ATPase (V-ATPase), a multisubunit enzyme composed of a peripheral complex (V1) that hydrolyzes ATP and a membrane integral complex (V0) that translocates protons. V-ATPase is responsible for acidifying and maintaining the pH of intracellular compartments and in some cell types, is targeted to the plasma membrane, where it is responsible for acidifying the extracellular environment. This is V-type proton ATPase subunit G 3 (Atp6v1g3) from Mus musculus (Mouse).